Reading from the N-terminus, the 339-residue chain is Outer membrane protein assembly factor BamC (339 aa).

The signal sequence occupies residues Met1–Ala19. Cys20 carries N-palmitoyl cysteine lipidation. Residue Cys20 is the site of S-diacylglycerol cysteine attachment.

It belongs to the BamC family. In terms of assembly, part of the Bam complex.

It is found in the cell outer membrane. In terms of biological role, part of the outer membrane protein assembly complex, which is involved in assembly and insertion of beta-barrel proteins into the outer membrane. This Vibrio cholerae serotype O1 (strain ATCC 39315 / El Tor Inaba N16961) protein is Outer membrane protein assembly factor BamC.